Reading from the N-terminus, the 504-residue chain is Xanthotoxol synthase (504 aa).

Residues Pro-3–His-23 form a helical membrane-spanning segment. The tract at residues Pro-363–Ile-368 is substrate specificity. Residue Cys-444 participates in heme binding.

It belongs to the cytochrome P450 family. Requires heme as cofactor.

It localises to the microsome membrane. The catalysed reaction is psoralen + reduced [NADPH--hemoprotein reductase] + O2 = xanthotoxol + oxidized [NADPH--hemoprotein reductase] + H2O + H(+). The enzyme catalyses 6-methoxycoumarin + reduced [NADPH--hemoprotein reductase] + O2 = scopoletin + oxidized [NADPH--hemoprotein reductase] + H2O + H(+). Its pathway is secondary metabolite biosynthesis. Its function is as follows. Involved in the biosynthesis of coumarins and furanocoumarins (FCs), natural products required for defense responses against attacks by predators with potential medical and agroindustrial usages such as anticoagulant, rodenticide and artificial vanilla substitutes. Catalyzes the conversion of psoralen into xanthotoxol and of 6-methoxycoumarin into scopoletin. Can also convert with a lower efficiency scopoletin into fraxetin and 7-methoxycoumarin into daphnetin-7-methylether, and use 7-methoxy-3-methylcoumarin as substrate. This Pastinaca sativa (Wild parsnip) protein is Xanthotoxol synthase.